Reading from the N-terminus, the 1179-residue chain is Integrin alpha-E (1179 aa).

A signal peptide spans 1–18 (MWLFHTLLCIASLALLAA). Over 19–1124 (FNVDVARPWL…VFLKDEKYHS (1106 aa)) the chain is Extracellular. FG-GAP repeat units lie at residues 22-79 (DVAR…EILC) and 80-138 (HPVE…PQAQ). Asparagine 49 is a glycosylation site (N-linked (GlcNAc...) asparagine). Cystine bridges form between cysteine 70–cysteine 79 and cysteine 126–cysteine 159. The interval 145–199 (ENLLDPDARVDTGDCYSNKEGGGEDDVNTARQRRALEKEEEEDKEEEEDEEEEEA) is X-domain (extra domain). A disordered region spans residues 158 to 200 (DCYSNKEGGGEDDVNTARQRRALEKEEEEDKEEEEDEEEEEAG). The span at 182-200 (KEEEEDKEEEEDEEEEEAG) shows a compositional bias: acidic residues. One can recognise a VWFA domain in the interval 200 to 389 (GTEIAIILDG…SKLRYNIISM (190 aa)). N-linked (GlcNAc...) asparagine glycosylation is found at asparagine 271 and asparagine 321. An FG-GAP 3 repeat occupies 390–442 (EGTVGDALHYQLAQIGFSAQILDERQVLLGAVGAFDWSGGALLYDTRSRRGRF). The N-linked (GlcNAc...) asparagine glycan is linked to asparagine 444. FG-GAP repeat units lie at residues 447–499 (AAAA…GREA), 500–560 (SFLP…DGSF), 563–627 (ARIL…GLSA), and 631–691 (QRIR…FTPS). Aspartate 522, aspartate 524, aspartate 526, aspartate 530, aspartate 586, serine 588, aspartate 590, aspartate 594, aspartate 654, serine 656, aspartate 658, and aspartate 662 together coordinate Ca(2+). Residues cysteine 706 and cysteine 762 are joined by a disulfide bond. N-linked (GlcNAc...) asparagine glycans are attached at residues asparagine 726 and asparagine 782. A disulfide bond links cysteine 823 and cysteine 829. Asparagine 857 carries an N-linked (GlcNAc...) asparagine glycan. Cysteine 893 and cysteine 907 are disulfide-bonded. 2 N-linked (GlcNAc...) asparagine glycosylation sites follow: asparagine 934 and asparagine 954. Disulfide bonds link cysteine 1008–cysteine 1033 and cysteine 1041–cysteine 1057. Asparagine 1065 and asparagine 1096 each carry an N-linked (GlcNAc...) asparagine glycan. A helical transmembrane segment spans residues 1125 to 1147 (LPIIIKGSVGGLLVLIVILVILF). Topologically, residues 1148–1179 (KCGFFKRKYQQLNLESIRKAQLKSENLLEEEN) are cytoplasmic. The GFFKR motif motif lies at 1150–1154 (GFFKR).

This sequence belongs to the integrin alpha chain family. Heterodimer of an alpha and a beta subunit. The alpha subunit is composed of a heavy and a light chains linked by a disulfide bond. Alpha-E associates with beta-7. In terms of tissue distribution, expressed on a subclass of T-lymphocytes known as intra-epithelial lymphocytes which are located between mucosal epithelial cells.

The protein localises to the membrane. Functionally, integrin alpha-E/beta-7 is a receptor for E-cadherin. It mediates adhesion of intra-epithelial T-lymphocytes to epithelial cell monolayers. This chain is Integrin alpha-E (ITGAE), found in Homo sapiens (Human).